A 46-amino-acid polypeptide reads, in one-letter code: Cystatin WCPI-3 (46 aa).

The short motif at 35 to 38 (VVAG) is the Secondary area of contact element.

It belongs to the cystatin family. Phytocystatin subfamily.

In terms of biological role, inhibitor of papain. The protein is Cystatin WCPI-3 of Wisteria floribunda (Japanese wisteria).